The chain runs to 148 residues: Large ribosomal subunit protein uL15 (148 aa).

The segment at 1–57 is disordered; it reads MRLNDVKPQKGSKKRRRRVGRGISAGQGASAGLGMRGQKSRSGSGTRPGFEGGQQPL. The segment covering 10–20 has biased composition (basic residues); that stretch reads KGSKKRRRRVG. Positions 23-35 are enriched in gly residues; it reads ISAGQGASAGLGM.

Belongs to the universal ribosomal protein uL15 family. As to quaternary structure, part of the 50S ribosomal subunit.

Its function is as follows. Binds to the 23S rRNA. The sequence is that of Large ribosomal subunit protein uL15 from Trichormus variabilis (strain ATCC 29413 / PCC 7937) (Anabaena variabilis).